The sequence spans 294 residues: Glyceraldehyde-3-phosphate dehydrogenase (294 aa).

3 residues coordinate NAD(+): aspartate 19, lysine 63, and threonine 105. D-glyceraldehyde 3-phosphate-binding positions include 134 to 136 and threonine 165; that span reads SCT. Residue cysteine 135 is the Nucleophile of the active site. The disordered stretch occupies residues 169–188; that stretch reads KTVDGPSHKDWRGGRGASQN. Residues 194 to 195 and arginine 217 each bind D-glyceraldehyde 3-phosphate; that span reads TG.

This sequence belongs to the glyceraldehyde-3-phosphate dehydrogenase family. As to quaternary structure, homotetramer.

It localises to the cytoplasm. The enzyme catalyses D-glyceraldehyde 3-phosphate + phosphate + NAD(+) = (2R)-3-phospho-glyceroyl phosphate + NADH + H(+). Its pathway is carbohydrate degradation; glycolysis; pyruvate from D-glyceraldehyde 3-phosphate: step 1/5. Functionally, catalyzes the oxidative phosphorylation of glyceraldehyde 3-phosphate (G3P) to 1,3-bisphosphoglycerate (BPG) using the cofactor NAD. The first reaction step involves the formation of a hemiacetal intermediate between G3P and a cysteine residue, and this hemiacetal intermediate is then oxidized to a thioester, with concomitant reduction of NAD to NADH. The reduced NADH is then exchanged with the second NAD, and the thioester is attacked by a nucleophilic inorganic phosphate to produce BPG. The protein is Glyceraldehyde-3-phosphate dehydrogenase (gap) of Serratia marcescens.